The chain runs to 284 residues: Elongation factor Ts (284 aa).

Residues 80-83 (TDFV) form an involved in Mg(2+) ion dislocation from EF-Tu region.

Belongs to the EF-Ts family.

The protein localises to the cytoplasm. Associates with the EF-Tu.GDP complex and induces the exchange of GDP to GTP. It remains bound to the aminoacyl-tRNA.EF-Tu.GTP complex up to the GTP hydrolysis stage on the ribosome. The chain is Elongation factor Ts from Photobacterium profundum (strain SS9).